Reading from the N-terminus, the 259-residue chain is 2,3-dihydroxy-2,3-dihydro-p-cumate dehydrogenase (259 aa).

NAD(+) is bound at residue 18-42 (VTGGAHGIGLGIVERLLGLGARVTA). The active-site Proton acceptor is the Tyr163.

This sequence belongs to the short-chain dehydrogenases/reductases (SDR) family.

The catalysed reaction is (2R,3S)-2,3-dihydroxy-2,3-dihydro-p-cumate + NAD(+) = 2,3-dihydroxy-p-cumate + NADH + H(+). It functions in the pathway aromatic compound metabolism; p-cumate degradation; acetaldehyde and pyruvate from p-cumate: step 2/7. The chain is 2,3-dihydroxy-2,3-dihydro-p-cumate dehydrogenase (cmtB) from Pseudomonas putida (strain ATCC 700007 / DSM 6899 / JCM 31910 / BCRC 17059 / LMG 24140 / F1).